Consider the following 134-residue polypeptide: Profilin-3 (134 aa).

An intrachain disulfide couples Cys13 to Cys118. The Involved in PIP2 interaction motif lies at 84-100 (AVIRGKKGSGGITSKKT). Thr114 carries the post-translational modification Phosphothreonine.

It belongs to the profilin family. As to quaternary structure, occurs in many kinds of cells as a complex with monomeric actin in a 1:1 ratio. In terms of processing, phosphorylated by MAP kinases.

The protein localises to the cytoplasm. It is found in the cytoskeleton. Binds to actin and affects the structure of the cytoskeleton. At high concentrations, profilin prevents the polymerization of actin, whereas it enhances it at low concentrations. The chain is Profilin-3 from Olea europaea (Common olive).